Here is a 772-residue protein sequence, read N- to C-terminus: Elongin-A (772 aa).

Residues 4–79 (ESALQVVEKL…AQWKKLVPVE (76 aa)) enclose the TFIIS N-terminal domain. 2 stretches are compositionally biased toward basic and acidic residues: residues 79-105 (ERNA…LQKE) and 136-156 (LSEL…DERK). Disordered stretches follow at residues 79–403 (ERNA…FEQP) and 418–466 (KKKK…EKPA). Phosphoserine is present on Ser196. Basic and acidic residues-rich tracts occupy residues 226–235 (QERHLGEPHG), 253–269 (RPVD…VSRE), 275–308 (LSKE…EGSS), 321–343 (SDNH…KSKQ), and 372–384 (PEGK…DRKS). 2 positions are modified to phosphoserine: Ser384 and Ser387. Thr394 is modified (phosphothreonine). The residue at position 434 (Lys434) is an N6-acetyllysine. The segment covering 434 to 443 (KGLKKNDSKS) has biased composition (basic and acidic residues). Ser516 is subject to Phosphoserine. Residues 522–681 (EAGFTGRRMN…PPRDVRRRQE (160 aa)) are activation domain. The BC-box stretch occupies residues 550-559 (TLHQQCIRVL). The F-box domain maps to 566–610 (IFEVGGVPYSVLEPVLERCTPDQLYRIEEYNHVLIEETDQLWKVH). A disordered region spans residues 674 to 732 (RDVRRRQEKFGTGGAAVPEKIKIKPAPYPMGSSHASASSISFNPSPEEPAYDGPSTSSA). Residues 705-714 (SSHASASSIS) are compositionally biased toward low complexity.

Heterotrimer of an A (ELOA, ELOA2 or ELOA3P), ELOB and ELOC subunit. Part of a multisubunit ubiquitin ligase complex consisting of elongin BC complex (ELOB and ELOC), elongin A/ELOA, RBX1 and CUL5. Interacts with ERCC6; the interaction is induced by DNA damaging agents or inhibitors of RNA polymerase II elongation. Interacts (via BC-box) with CUL5.

It localises to the nucleus. Functionally, SIII, also known as elongin, is a general transcription elongation factor that increases the RNA polymerase II transcription elongation past template-encoded arresting sites. Subunit A is transcriptionally active and its transcription activity is strongly enhanced by binding to the dimeric complex of the SIII regulatory subunits B and C (elongin BC complex). In terms of biological role, as part of a multisubunit complex composed of elongin BC complex (ELOB and ELOC), elongin A/ELOA, RBX1 and CUL5; polyubiquitinates monoubiquitinated POLR2A. In Homo sapiens (Human), this protein is Elongin-A.